A 194-amino-acid chain; its full sequence is MMINIQEDKLVSAHDAEEILRFFNCHDSALQQEATTLLTQEAHLLDIQAYRAWLEHCVGSEVQYQVISRELRAASERRYKLNEAMNVYNENFQQLKVRVEHQLDPQNWGNSPKLRFTRFITNVQAAMDVNDKELLHIRSNVILHRARRGNQVDVFYAAREDKWKRGEGGVRKLVQRFVDYPERILQTHNLMVFL.

It belongs to the bacterial ring-hydroxylating dioxygenase beta subunit family. The naphthalene dioxygenase (NDO) multicomponent enzyme system is composed of an electron transfer component and a dioxygenase component (iron sulfur protein (ISP)). The electron transfer component is composed of a ferredoxin reductase (NdoR) and a ferredoxin (NdoA), and the dioxygenase component is formed of a heterohexamer (trimer of heterodimers) of three large alpha subunits (NdoB) and three small beta subunits (NdoC).

It functions in the pathway aromatic compound metabolism; naphthalene degradation. In terms of biological role, component of the naphthalene dioxygenase (NDO) multicomponent enzyme system which catalyzes the incorporation of both atoms of molecular oxygen into naphthalene to form cis-(1R,2S)-dihydroxy-1,2-dihydronaphthalene. The beta subunit seems to have a structural role in the holoenzyme. Also able to catalyze the cis-dihydroxylation of biphenyl and phenanthrene. The chain is Naphthalene 1,2-dioxygenase system, small oxygenase component from Pseudomonas putida (Arthrobacter siderocapsulatus).